The chain runs to 163 residues: Phosphopantetheine adenylyltransferase (163 aa).

Ser10 contributes to the substrate binding site. Residues 10–11 (SF) and His18 contribute to the ATP site. The substrate site is built by Lys42, Leu74, and Arg88. Residues 89–91 (GLR), Glu99, and 124–130 (YSFLSSS) each bind ATP.

Belongs to the bacterial CoaD family. Homohexamer. Requires Mg(2+) as cofactor.

Its subcellular location is the cytoplasm. It catalyses the reaction (R)-4'-phosphopantetheine + ATP + H(+) = 3'-dephospho-CoA + diphosphate. It participates in cofactor biosynthesis; coenzyme A biosynthesis; CoA from (R)-pantothenate: step 4/5. In terms of biological role, reversibly transfers an adenylyl group from ATP to 4'-phosphopantetheine, yielding dephospho-CoA (dPCoA) and pyrophosphate. The protein is Phosphopantetheine adenylyltransferase of Bacillus cereus (strain G9842).